The chain runs to 235 residues: Small ribosomal subunit protein uS2c (235 aa).

It belongs to the universal ribosomal protein uS2 family.

The protein resides in the plastid. The polypeptide is Small ribosomal subunit protein uS2c (rps2) (Euglena longa (Euglenophycean alga)).